The primary structure comprises 86 residues: Weak toxin 3 (86 aa).

The signal sequence occupies residues 1–23 (MKTLLLTLVVVTIVCLDLGYTLT). Intrachain disulfides connect cysteine 24–cysteine 45, cysteine 27–cysteine 32, cysteine 38–cysteine 63, cysteine 67–cysteine 78, and cysteine 79–cysteine 84.

Belongs to the three-finger toxin family. Ancestral subfamily. Orphan group II sub-subfamily. In terms of tissue distribution, expressed by the venom gland.

The protein localises to the secreted. Functionally, binds with low affinity to muscular (alpha-1-beta-1-delta-epsilon/CHRNA1-CHRNB1-CHRND-CHRNE) and very low affinity to neuronal (alpha-7/CHRNA7) nicotinic acetylcholine receptor (nAChR). This Bungarus candidus (Malayan krait) protein is Weak toxin 3.